Reading from the N-terminus, the 449-residue chain is Exodeoxyribonuclease 7 large subunit (449 aa).

Belongs to the XseA family. As to quaternary structure, heterooligomer composed of large and small subunits.

The protein resides in the cytoplasm. The catalysed reaction is Exonucleolytic cleavage in either 5'- to 3'- or 3'- to 5'-direction to yield nucleoside 5'-phosphates.. Functionally, bidirectionally degrades single-stranded DNA into large acid-insoluble oligonucleotides, which are then degraded further into small acid-soluble oligonucleotides. The polypeptide is Exodeoxyribonuclease 7 large subunit (Aliivibrio fischeri (strain MJ11) (Vibrio fischeri)).